The primary structure comprises 252 residues: Mediator of RNA polymerase II transcription subunit 4 (252 aa).

A coiled-coil region spans residues 70 to 112 (KIHQEMQVLEKEVEKRDSDIQQLQKQLKEAEHILATAVYQAKE). A disordered region spans residues 218–252 (HSNEFLMESLGPNKENEEDVEVMSTDSSSSSSDSD). Residues 241–252 (STDSSSSSSDSD) show a composition bias toward low complexity.

Belongs to the Mediator complex subunit 4 family. In terms of assembly, component of the Mediator complex.

The protein localises to the nucleus. Functionally, component of the Mediator complex, a coactivator involved in the regulated transcription of nearly all RNA polymerase II-dependent genes. Mediator functions as a bridge to convey information from gene-specific regulatory proteins to the basal RNA polymerase II transcription machinery. Mediator is recruited to promoters by direct interactions with regulatory proteins and serves as a scaffold for the assembly of a functional preinitiation complex with RNA polymerase II and the general transcription factors. The chain is Mediator of RNA polymerase II transcription subunit 4 (med4) from Xenopus tropicalis (Western clawed frog).